The sequence spans 133 residues: MRHRVAHRKFSRTSAHRMSMLLNLCISLIKHERISTTLPKAKEIRPYVEKLITIGKVYKEKNLVYGKRLLISKIKNPDIADKLIGILSVRYKSRNGGYTRIIKNGFRKGDSAPMAIIELVDRQIITVESNKNS.

This sequence belongs to the bacterial ribosomal protein bL17 family. In terms of assembly, part of the 50S ribosomal subunit. Contacts protein L32.

The polypeptide is Large ribosomal subunit protein bL17 (Ehrlichia chaffeensis (strain ATCC CRL-10679 / Arkansas)).